The following is a 1287-amino-acid chain: MAYKIRKINRNVERRDYTKVSMNLSLPNLIGIQTETFEWFKTKGIQEVLDEFFPILSFDGSSVLTLENWGFKEPRLSVRQAREESKIYDAPIYANLKLSVNKTEEIQKEFDGVDQEDTLKVLTHWLEEKTGNGNITFKQQSQNSYFFEITIKKSEKPDLIQIDIIEDKKTSLICNVSIYKSGEVFLGDFPLMTEAGTFIINGSQKVIVSQLVRSPGAYFNKELNRKTGEMIYFADIIPSRGTWLEYETDSKKIGSDAINPLYVKIDKSRKTTATSLLLAFGISKDDILNIFDNDEVLVETLQQDSIIGDFKIDWSNQVQEIYKKIRQGETATSEGASKFINSILFDKRKYDLTKAGRFKLKQKLSIKNRILNKVIAEDILDANNNVLIAKDTEVTKNNIQEISKILDQDVMSIDLKYLSDIPGNRKVQKIRVYKDSELKTDTTCLIGLTNSSNEEFITVADILSTVSYLLNLKYNIGEIDDIDNLGNRRVRTVGELLQNQFRMGLNRIDKNVKEKLATSDLYKVKTSTIINAKPLTAIIGEFFNLSQLSQFMDQINPLSELTNKRRLTALGPGGLSRDRAGLEVRDVHPSHYGRICPIETPEGPNIGLINNLSTYARVNEYGFITTPYRKVINGIIQNDQVEYLTADQEKNFIIAQSNVNQDENGKILDEIIVSRFNGDDYMAKVEEIHYIDVSPKQIVSVATSGIPFLENDDANRALMGANMQRQAVPLIKPESPIVATGIEFEAARDSGEAIVAKEDAIVKYVDSKTIITDGESGIRTYILSDYERSNNGTSLTQSPIVKVGDVVKKGEIIADGPSMDQGELAIGQNVVVAFSTYNGYNFEDAIVMSERIVIDDRFTSIHIDEYTLEVRNTKQGQEEVTREIPNMSEQAKRHLDAEGIVAIGTEVKVGDVLVGKVTPKGQVQLSPEDKLLHAIFGEKSRNVKDNSLRVPNGGEGIVQSIKRFKAKSALNPDGIELPADIIEVIKVYVVQKRKIQEGDKMSGRHGNKGIISRILPIEDMPHLEDGTPVDIILNPQGVPSRMNIGQILEIHLGMAAKKLNQKVITPVFEGLNEKELEEIMAEAGMTNYGKVTLIDGQTGEPFDKPIAVGVMYMLKLSHMVDDKIHARNVGPYSLITQQPLGGKAQNGGQRFGEMEVWALEAYGAAHTLREILTIKSDDIKGRSKTYEAIVRSKRIPEPGIPESFNVLSKEIMGLGFNMYMIDETGEKSAINAYDKKDFEIDNYDDEILIKTDNLYIDDQDVDAEFEDLTYVDENDILNSFELDNEEE.

This sequence belongs to the RNA polymerase beta chain family. As to quaternary structure, the RNAP catalytic core consists of 2 alpha, 1 beta, 1 beta' and 1 omega subunit. When a sigma factor is associated with the core the holoenzyme is formed, which can initiate transcription.

It catalyses the reaction RNA(n) + a ribonucleoside 5'-triphosphate = RNA(n+1) + diphosphate. Functionally, DNA-dependent RNA polymerase catalyzes the transcription of DNA into RNA using the four ribonucleoside triphosphates as substrates. The chain is DNA-directed RNA polymerase subunit beta from Mycoplasma capricolum subsp. capricolum (strain California kid / ATCC 27343 / NCTC 10154).